We begin with the raw amino-acid sequence, 435 residues long: MQISVESVNSIKKKLNFEIPADKVSAEVDKAYAEIRKHAAIKGFRKGKVPMSLIEKHYGEKMAEDVVKNLVQESYFSAVSEQGLNPVGYPAIESNPLKKGESFKYSATVEVFPEVEVKDYTGLAVVKEKLEIDDSVVAARLKEMQERMSQLGPAPEGHAAAMGDFVTFDFKGAMDGVYFEGGSAEDFQLELGSGRFIPGFEEQMVGMTVGTNSTIKVNFPEGYGNADLAGKPADFEVSIKEIKVKELPELNDDFAKEFGEEFETLDLLKAKLAEMNEAQEVSRINAELRDRLIKALIEKNELEVPEALVDRQAQMMLESTKQRLASQRLSLEMMGMTDDSYKAQFRDNAREQVKGSLLLDAVAEKEKIEPTEEEFEAQLSVIAEQTRQDLEKVTQLYKTNERAKDNLMAQMREDKAVQFILDRAKVTEVPKAEIK.

The PPIase FKBP-type domain maps to 163 to 248 (GDFVTFDFKG…IKEIKVKELP (86 aa)).

It belongs to the FKBP-type PPIase family. Tig subfamily.

It localises to the cytoplasm. It catalyses the reaction [protein]-peptidylproline (omega=180) = [protein]-peptidylproline (omega=0). Its function is as follows. Involved in protein export. Acts as a chaperone by maintaining the newly synthesized protein in an open conformation. Functions as a peptidyl-prolyl cis-trans isomerase. The protein is Trigger factor of Citrifermentans bemidjiense (strain ATCC BAA-1014 / DSM 16622 / JCM 12645 / Bem) (Geobacter bemidjiensis).